A 71-amino-acid chain; its full sequence is Biotinylated protein TB7.3 homolog (71 aa).

In terms of domain architecture, Biotinyl-binding spans 2-71 (AEDVRAEIVA…QAGHLIAVID (70 aa)). N6-biotinyllysine is present on Lys37.

The sequence is that of Biotinylated protein TB7.3 homolog from Mycolicibacterium smegmatis (strain ATCC 700084 / mc(2)155) (Mycobacterium smegmatis).